The sequence spans 578 residues: MIKRYLQFVKPYKYRIFATIIVGIIKFGIPMLIPLLIKYAIDGVINNHALTTDEKVHHLTIAIGIALFIFVIVRPPIEFIRQYLAQWTSNKILYDIRKKLYNHLQALSARFYANNQVGQVISRVINDVEQTKDFILTGLMNIWLDCITIIIALSIMFFLDVKLTLAALFIFPFYILTVYVFFGRLRKLTRERSQALAEVQGFLHERVQGISVVKSFAIEDNEAKNFDKKNTNFLTRALKHTRWNAYSFAAINTVTDIGPIIVIGVGAYLAISGSITVGTLAAFVGYLELLFGPLRRLVASFTTLTQSFASMDRVFQLIDEDYDIKNGVGAQPIEIKQGRIDIDHVSFQYNDNEAPILKDINLSIEKGETVAFVGMSGGGKSTLINLIPRFYDVTSGQILIDGHNIKDFLTGSLRNQIGLVQQDNILFSDTVKENILLGRPTATDEEVVEAAKMANAHDFIMNLPQGYDTEVGERGVKLSGGQKQRLSIARIFLNNPPILILDEATSALDLESESIIQEALDVLSKDRTTLIVAHRLSTITHADKIVVIENGHIVETGTHRELIAKQGAYEHLYSIQNL.

Residues 1 to 15 lie on the Cytoplasmic side of the membrane; that stretch reads MIKRYLQFVKPYKYR. Residues 16–36 form a helical membrane-spanning segment; it reads IFATIIVGIIKFGIPMLIPLL. The ABC transmembrane type-1 domain occupies 16–306; the sequence is IFATIIVGII…LVASFTTLTQ (291 aa). Residues 37–59 are Extracellular-facing; the sequence is IKYAIDGVINNHALTTDEKVHHL. The chain crosses the membrane as a helical span at residues 60 to 80; sequence TIAIGIALFIFVIVRPPIEFI. The Cytoplasmic segment spans residues 81-138; sequence RQYLAQWTSNKILYDIRKKLYNHLQALSARFYANNQVGQVISRVINDVEQTKDFILTG. A helical transmembrane segment spans residues 139–159; the sequence is LMNIWLDCITIIIALSIMFFL. The Extracellular segment spans residues 160 to 162; the sequence is DVK. The chain crosses the membrane as a helical span at residues 163–183; sequence LTLAALFIFPFYILTVYVFFG. The Cytoplasmic segment spans residues 184 to 244; the sequence is RLRKLTRERS…TRALKHTRWN (61 aa). Residues 245–263 form a helical membrane-spanning segment; sequence AYSFAAINTVTDIGPIIVI. The Extracellular segment spans residues 264-269; sequence GVGAYL. A helical transmembrane segment spans residues 270–287; it reads AISGSITVGTLAAFVGYL. The Cytoplasmic portion of the chain corresponds to 288–578; the sequence is ELLFGPLRRL…YEHLYSIQNL (291 aa). The region spanning 340 to 575 is the ABC transporter domain; the sequence is IDIDHVSFQY…QGAYEHLYSI (236 aa). Residue 374-381 coordinates ATP; it reads GMSGGGKS.

This sequence belongs to the ABC transporter superfamily. Homodimer.

It is found in the cell membrane. May be involved in multidrug export. Transmembrane domains (TMD) form a pore in the cell membrane and the ATP-binding domain (NBD) is responsible for energy generation. The protein is Putative multidrug export ATP-binding/permease protein SA1683 of Staphylococcus aureus (strain N315).